Consider the following 102-residue polypeptide: Small integral membrane protein 29 (102 aa).

N-linked (GlcNAc...) asparagine glycosylation is present at asparagine 3. Residues 21 to 41 form a helical membrane-spanning segment; that stretch reads VLGPFFLITLVGVVVAVVMYV.

Expressed in spleen, thymus, prostate, testis, uterus, small intestine, colon and peripheral blood leukocytes.

The protein resides in the membrane. This is Small integral membrane protein 29 from Homo sapiens (Human).